Consider the following 368-residue polypeptide: Cytochrome b (368 aa).

The next 4 helical transmembrane spans lie at 33–53 (FGSLLGLCLITQILTGIFLAM), 77–99 (WLIRSIHANSASMFFICIYTHTG), 112–132 (TWMVGVTLLLITILTAFLGYV), and 178–198 (FYALHFLFPFLISALSLMHII). Heme b-binding residues include His-83 and His-97. The heme b site is built by His-182 and His-196. An a ubiquinone-binding site is contributed by His-201. Helical transmembrane passes span 224–244 (FSAKDLIGVILLWIMLGSVVL), 288–308 (LGGVLALIMSIAILYFLPMMN), 323–343 (IAFWLLVTNFIVLMWIGSKPV), and 345–365 (SPFEEIGQIMTVTYFSIYMIM).

It belongs to the cytochrome b family. As to quaternary structure, the main subunits of complex b-c1 are: cytochrome b, cytochrome c1 and the Rieske protein. The cofactor is heme b.

It is found in the mitochondrion inner membrane. Its function is as follows. Component of the ubiquinol-cytochrome c reductase complex (complex III or cytochrome b-c1 complex) that is part of the mitochondrial respiratory chain. The b-c1 complex mediates electron transfer from ubiquinol to cytochrome c. Contributes to the generation of a proton gradient across the mitochondrial membrane that is then used for ATP synthesis. This is Cytochrome b (mt:Cyt-b) from Bugula neritina (Brown bryozoan).